Reading from the N-terminus, the 197-residue chain is Adenylylsulfatase HINT3 (197 aa).

A disordered region spans residues N14–S43. Positions V51 to W158 constitute an HIT domain. Positions H143–H147 match the Histidine triad motif motif. Residue H145 is the Tele-AMP-histidine intermediate of the active site. Substrate is bound at residue H147.

The protein localises to the peroxisome. It carries out the reaction adenosine 5'-phosphosulfate + H2O = sulfate + AMP + 2 H(+). In terms of biological role, possesses adenylylsulfatase activity in vitro. This Arabidopsis thaliana (Mouse-ear cress) protein is Adenylylsulfatase HINT3.